We begin with the raw amino-acid sequence, 426 residues long: Serine--tRNA ligase (426 aa).

Position 231 to 233 (Thr231 to Glu233) interacts with L-serine. Position 262–264 (Arg262–Glu264) interacts with ATP. Glu285 is an L-serine binding site. Residue Glu349–Ser352 participates in ATP binding. Ser385 contributes to the L-serine binding site.

The protein belongs to the class-II aminoacyl-tRNA synthetase family. Type-1 seryl-tRNA synthetase subfamily. In terms of assembly, homodimer. The tRNA molecule binds across the dimer.

The protein localises to the cytoplasm. It carries out the reaction tRNA(Ser) + L-serine + ATP = L-seryl-tRNA(Ser) + AMP + diphosphate + H(+). It catalyses the reaction tRNA(Sec) + L-serine + ATP = L-seryl-tRNA(Sec) + AMP + diphosphate + H(+). Its pathway is aminoacyl-tRNA biosynthesis; selenocysteinyl-tRNA(Sec) biosynthesis; L-seryl-tRNA(Sec) from L-serine and tRNA(Sec): step 1/1. Its function is as follows. Catalyzes the attachment of serine to tRNA(Ser). Is also able to aminoacylate tRNA(Sec) with serine, to form the misacylated tRNA L-seryl-tRNA(Sec), which will be further converted into selenocysteinyl-tRNA(Sec). The polypeptide is Serine--tRNA ligase (Legionella pneumophila (strain Lens)).